Consider the following 817-residue polypeptide: DNA gyrase subunit A (817 aa).

In terms of domain architecture, Topo IIA-type catalytic spans 39-505; the sequence is LPDARDGLKP…AVEDVSIEDL (467 aa). Tyr127 (O-(5'-phospho-DNA)-tyrosine intermediate) is an active-site residue. The GyrA-box signature appears at 532–538; the sequence is QGRGGKG.

The protein belongs to the type II topoisomerase GyrA/ParC subunit family. Heterotetramer, composed of two GyrA and two GyrB chains. In the heterotetramer, GyrA contains the active site tyrosine that forms a transient covalent intermediate with DNA, while GyrB binds cofactors and catalyzes ATP hydrolysis.

Its subcellular location is the cytoplasm. The enzyme catalyses ATP-dependent breakage, passage and rejoining of double-stranded DNA.. In terms of biological role, a type II topoisomerase that negatively supercoils closed circular double-stranded (ds) DNA in an ATP-dependent manner to modulate DNA topology and maintain chromosomes in an underwound state. Negative supercoiling favors strand separation, and DNA replication, transcription, recombination and repair, all of which involve strand separation. Also able to catalyze the interconversion of other topological isomers of dsDNA rings, including catenanes and knotted rings. Type II topoisomerases break and join 2 DNA strands simultaneously in an ATP-dependent manner. This chain is DNA gyrase subunit A, found in Aminobacterium colombiense (strain DSM 12261 / ALA-1).